Reading from the N-terminus, the 312-residue chain is Malate dehydrogenase (312 aa).

Residues 7 to 13 (GAAGGIG) and D34 contribute to the NAD(+) site. The substrate site is built by R81 and R87. NAD(+) is bound by residues N94 and 117-119 (ITN). Residues N119 and R153 each coordinate substrate. The Proton acceptor role is filled by H177. M227 is a binding site for NAD(+).

The protein belongs to the LDH/MDH superfamily. MDH type 1 family. As to quaternary structure, homodimer.

It carries out the reaction (S)-malate + NAD(+) = oxaloacetate + NADH + H(+). Its function is as follows. Catalyzes the reversible oxidation of malate to oxaloacetate. The chain is Malate dehydrogenase from Escherichia coli (strain SE11).